Consider the following 723-residue polypeptide: Homeobox protein HAT3.1 (723 aa).

Residues Met-1 to Thr-10 are compositionally biased toward basic residues. Disordered stretches follow at residues Met-1–Arg-94 and Lys-135–Glu-173. Positions Arg-11 to Asp-23 are enriched in polar residues. The span at Leu-58 to Ser-83 shows a compositional bias: basic and acidic residues. The PHD-type zinc-finger motif lies at Asp-265–Lys-322. Disordered regions lie at residues Gly-357–Arg-628 and Val-680–Lys-723. Positions Leu-365–Glu-407 are enriched in acidic residues. Positions Glu-417 to Lys-427 are enriched in basic and acidic residues. Residues Asp-435–Lys-453 show a composition bias toward acidic residues. Composition is skewed to basic and acidic residues over residues Arg-518–Asp-530 and Asp-547–Asp-556. Residues Lys-580 to Ala-589 show a composition bias toward basic residues. Residues Ser-614–Pro-673 constitute a DNA-binding region (homeobox). A compositionally biased stretch (basic and acidic residues) spans Val-680–Glu-690. The span at Val-695–Thr-705 shows a compositional bias: polar residues.

This sequence belongs to the PHD-associated homeobox family. In terms of tissue distribution, primarily detected in root tissue.

It is found in the nucleus. Its function is as follows. Binds only to large DNA fragments. Recognizes a DNA fragment carrying 8 copies of box7 motif of the light-induced cab-E promoter of Nicotiana plumbaginifolia. Also recognizes the box7m1 motif. The protein is Homeobox protein HAT3.1 (HAT3.1) of Arabidopsis thaliana (Mouse-ear cress).